The following is a 369-amino-acid chain: Cytokine receptor common subunit gamma (369 aa).

Residues 1–22 (MLKLLLSPRSFLVLQLLLLRAG) form the signal peptide. At 23 to 263 (WSSKVLMSSA…ENPSLFALEA (241 aa)) the chain is on the extracellular side. A disulfide bond links cysteine 62 and cysteine 72. N-linked (GlcNAc...) asparagine glycosylation is found at asparagine 71, asparagine 75, asparagine 84, and asparagine 96. Cysteines 102 and 115 form a disulfide. In terms of domain architecture, Fibronectin type-III spans 156 to 254 (APENLTLSNL…VHWGSHTVEE (99 aa)). Residues asparagine 159 and asparagine 164 are each glycosylated (N-linked (GlcNAc...) asparagine). The WSXWS motif motif lies at 238 to 242 (WSKWS). Residues 264 to 284 (VLIPVGTMGLIITLIFVYCWL) traverse the membrane as a helical segment. At 285 to 369 (ERMPPIPPIK…PPCYSLKPEA (85 aa)) the chain is on the cytoplasmic side. Positions 286–294 (RMPPIPPIK) match the Box 1 motif motif.

Belongs to the type I cytokine receptor family. Type 5 subfamily. The gamma subunit is common to the IL2, IL4, IL7, IL15, IL21 and probably also the IL13 receptors. Interacts with SHB upon interleukin stimulation. Interacts with IL9.

Its subcellular location is the cell membrane. It is found in the cell surface. Functionally, common subunit for the receptors for a variety of interleukins. Probably in association with IL15RA, involved in the stimulation of neutrophil phagocytosis by IL15. The polypeptide is Cytokine receptor common subunit gamma (Il2rg) (Mus musculus (Mouse)).